The sequence spans 166 residues: uncharacterized protein (166 aa).

The HTH asnC-type domain maps to 3–65; that stretch reads LTEKETEILE…IDWRKVDGHE (63 aa). Positions 22 to 41 form a DNA-binding region, H-T-H motif; sequence LETIAKMAGIPVNEVKTIID.

This is an uncharacterized protein from Bacillus subtilis (strain 168).